A 130-amino-acid polypeptide reads, in one-letter code: Con-Ins G2b (130 aa).

The signal sequence occupies residues 1 to 23 (MTTSSYFLLVALGLLLYVRQSFS). 4 disulfides stabilise this stretch: cysteine 29-cysteine 100, cysteine 41-cysteine 103, cysteine 53-cysteine 116, and cysteine 102-cysteine 107. Proline 34 is subject to 4-hydroxyproline; partial. Positions 54–77 (EEEEARRGGTNDGGKKRRRASPLR) are disordered. Positions 59–92 (RRGGTNDGGKKRRRASPLRKRRRFISMLKARAKR) are cleaved as a propeptide — c peptide. The span at 68 to 77 (KKRRRASPLR) shows a compositional bias: basic residues. The residue at position 111 (glutamate 111) is a 4-carboxyglutamate; partial.

This sequence belongs to the insulin family. In terms of assembly, heterodimer of A and B chains; disulfide-linked. As to expression, expressed by the venom gland.

The protein resides in the secreted. Functionally, this venom insulin, from a fish-hunting cone snail, facilitates prey capture by rapidly inducing hypoglycemic shock. Intraperitoneal injection of this peptide into zebrafish lowers blood glucose with the same potency than human insulin. In vivo, when applied to water, this peptide reduces overall locomotor activity of zebrafish larvae, observed as a significant decrease in the percentage of time spent swimming and movement frequency. This is Con-Ins G2b from Conus geographus (Geography cone).